The following is a 724-amino-acid chain: Eukaryotic elongation factor 2 kinase (724 aa).

Residue Ala2 is modified to N-acetylalanine. The interval 11–35 (EGVDGGGSSGAGRHGDSDTDSDDDE) is disordered. Positions 13-22 (VDGGGSSGAG) are enriched in gly residues. Phosphoserine is present on residues Ser18, Ser27, Ser70, and Ser73. Ser77 is modified (phosphoserine; by autocatalysis and TRPM7). The calmodulin-binding stretch occupies residues 80–93 (FKEAWKHAIEKAKH). The Alpha-type protein kinase domain occupies 115 to 325 (RYNAVTGEWL…ICQSMGLAPF (211 aa)). Ser242 carries the post-translational modification Phosphoserine. 295-301 (GDGNLGV) serves as a coordination point for ATP. Thr347 carries the post-translational modification Phosphothreonine. Phosphothreonine; by autocatalysis is present on Thr352. The disordered stretch occupies residues 353–476 (EEKCGSPRIR…PESDEDSLGS (124 aa)). Residue Ser358 is modified to Phosphoserine; by MAPK13 and CDK1. Residues 364 to 376 (LSGSRPPLLLRLS) are compositionally biased toward low complexity. 2 positions are modified to phosphoserine: Ser365 and Ser391. Polar residues predominate over residues 385-403 (SDVTFDSLPSSPSSATPHS). The residue at position 397 (Ser397) is a Phosphoserine; by AMPK. Composition is skewed to basic and acidic residues over residues 421 to 435 (GPRD…RDSE) and 444 to 468 (SEKR…RRPE). Phosphoserine is present on residues Ser434, Ser444, Ser469, Ser473, and Ser476. Ser499 is subject to Phosphoserine; by PKA.

This sequence belongs to the protein kinase superfamily. Alpha-type protein kinase family. In terms of assembly, monomer or homodimer. Interacts with Calmodulin/CALM1; this interaction is strictly required for phosphorylation activity. The N-terminus is blocked. Post-translationally, autophosphorylated at multiple residues, Thr-347 being the major site. Phosphorylated by AMP-activated protein kinase AMPK at Ser-397 leading to EEF2K activation and protein synthesis inhibition. Phosphorylated by TRPM7 at Ser-77 resulting in improved protein stability, higher EE2F phosphorylated and subsequently reduced rate of protein synthesis. Phosphorylation by other kinases such as CDK1 and MAPK13 at Ser-358 or RPS6KA1 and RPS6KB1 at Ser-365 instead decrease EEF2K activity and promote protein synthesis. As to expression, widely expressed, with high levels in reticulocytes and skeletal muscle.

The enzyme catalyses [translation elongation factor 2] + ATP = [translation elongation factor 2]-phosphate + ADP + H(+). Undergoes calcium/calmodulin-dependent intramolecular autophosphorylation, and this results in it becoming partially calcium/calmodulin-independent. Its function is as follows. Threonine kinase that regulates protein synthesis by controlling the rate of peptide chain elongation. Upon activation by a variety of upstream kinases including AMPK or TRPM7, phosphorylates the elongation factor EEF2 at a single site, renders it unable to bind ribosomes and thus inactive. In turn, the rate of protein synthesis is reduced. This chain is Eukaryotic elongation factor 2 kinase, found in Rattus norvegicus (Rat).